The primary structure comprises 511 residues: Apolipoprotein N-acyltransferase (511 aa).

Helical transmembrane passes span 24 to 44 (LALAPFVYWPLAILSIALLYL), 58 to 78 (GWWYGFGAFGAGTSWIYVSIH), 90 to 110 (FLMLGFTAGVAFFFALPAWLW), 125 to 145 (LAFAALWLALELFRSWFLTGF), 163 to 183 (VPVGGVWLSSFVIALSAALLV), and 192 to 212 (GASLLLGLVLLLGPWAAGLYL). Residues 230–470 (IQGNIAQELK…QGILRGEVIP (241 aa)) enclose the CN hydrolase domain. Residue E269 is the Proton acceptor of the active site. K330 is a catalytic residue. C382 serves as the catalytic Nucleophile. The chain crosses the membrane as a helical span at residues 482–502 (VWPLAGLAGVLLLWALLGRQL).

The protein belongs to the CN hydrolase family. Apolipoprotein N-acyltransferase subfamily.

Its subcellular location is the cell inner membrane. It carries out the reaction N-terminal S-1,2-diacyl-sn-glyceryl-L-cysteinyl-[lipoprotein] + a glycerophospholipid = N-acyl-S-1,2-diacyl-sn-glyceryl-L-cysteinyl-[lipoprotein] + a 2-acyl-sn-glycero-3-phospholipid + H(+). Its pathway is protein modification; lipoprotein biosynthesis (N-acyl transfer). In terms of biological role, catalyzes the phospholipid dependent N-acylation of the N-terminal cysteine of apolipoprotein, the last step in lipoprotein maturation. The chain is Apolipoprotein N-acyltransferase from Pseudomonas aeruginosa (strain UCBPP-PA14).